A 205-amino-acid chain; its full sequence is MGGKWSKKSRVEWPEVRKRMRETPAAAKGVGAVSQDLDKYGAVTSSNTSSTNASCAWLEAQEEGDVGFPVRPQVPLRPMTYKAAFDLSFFLKEKGGLDGLIHSQKRQEILDLWVYHTQGFFPDWQNYTPGPGIRYPLTFGWCYKLVPVDPAEVEEATGGENNSLLHPICQHGVDDEEKEVLMWKFDSTLALKHRAYELHPEFYKD.

Glycine 2 is lipidated: N-myristoyl glycine; by host. Serine 6 carries the phosphoserine; by host modification. Positions 62-65 (EEGD) are acidic; interacts with host PACS1 and PACS2; stabilizes the interaction of NEF/MHC-I with host AP1M1; necessary for MHC-I internalization. Positions 69–78 (PVRPQVPLRP) are SH3-binding; interaction with Src family tyrosine kinases. The PxxP; stabilizes the interaction of NEF/MHC-I with host AP1M1; necessary for MHC-I internalization signature appears at 72–75 (PQVP). Residues 108–124 (EILDLWVYHTQGFFPDW) form a mediates dimerization, Nef-PTE1 interaction region. The interval 148–180 (VDPAEVEEATGGENNSLLHPICQHGVDDEEKEV) is binding to ATP6V1H. A Dileucine internalization motif; necessary for CD4 internalization motif is present at residues 164 to 165 (LL). Residues 174–175 (DD) carry the Diacidic; necessary for CD4 internalization motif.

It belongs to the lentivirus primate group Nef protein family. Monomer; cytosolic form. Homodimer; membrane bound form. Interacts with Nef associated p21-activated kinase (PAK2); this interaction activates PAK2. Associates with the Nef-MHC-I-AP1 complex; this complex is required for MHC-I internalization. Interacts (via C-terminus) with host PI3-kinase. Interacts with host PACS1; this interaction seems to be weak. Interacts with host PACS2. Interacts with host LCK and MAPK3; these interactions inhibit the kinase activity of the latter. Interacts with host ATP6V1H; this interaction may play a role in CD4 endocytosis. Associates with the CD4-Nef-AP2 complex; this complex is required for CD4 internalization. Interacts with host AP2 subunit alpha and AP2 subunit sigma2. Interacts with TCR-zeta chain; this interaction up-regulates the Fas ligand (FasL) surface expression. Interacts with host HCK, LYN, and SRC; these interactions activate the Src family kinases. Interacts with MAP3K5; this interaction inhibits the Fas and TNFR-mediated death signals. Interacts with beta-COP and PTE1. Interacts with human RACK1; this increases Nef phosphorylation by PKC. Interacts with TP53; this interaction decreases the half-life of TP53, protecting the infected cell against p53-mediated apoptosis. The virion-associated Nef proteins are cleaved by the viral protease to release the soluble C-terminal core protein. Nef is probably cleaved concomitantly with viral structural proteins on maturation of virus particles. Post-translationally, myristoylated. In terms of processing, phosphorylated on serine residues, probably by host PKCdelta and theta.

Its subcellular location is the host cell membrane. It is found in the virion. It localises to the secreted. The protein localises to the host Golgi apparatus membrane. Its function is as follows. Factor of infectivity and pathogenicity, required for optimal virus replication. Alters numerous pathways of T-lymphocyte function and down-regulates immunity surface molecules in order to evade host defense and increase viral infectivity. Alters the functionality of other immunity cells, like dendritic cells, monocytes/macrophages and NK cells. In terms of biological role, in infected CD4(+) T-lymphocytes, down-regulates the surface MHC-I, mature MHC-II, CD4, CD28, CCR5 and CXCR4 molecules. Mediates internalization and degradation of host CD4 through the interaction of with the cytoplasmic tail of CD4, the recruitment of AP-2 (clathrin adapter protein complex 2), internalization through clathrin coated pits, and subsequent transport to endosomes and lysosomes for degradation. Diverts host MHC-I molecules to the trans-Golgi network-associated endosomal compartments by an endocytic pathway to finally target them for degradation. MHC-I down-regulation may involve AP-1 (clathrin adapter protein complex 1) or possibly Src family kinase-ZAP70/Syk-PI3K cascade recruited by PACS2. In consequence infected cells are masked for immune recognition by cytotoxic T-lymphocytes. Decreasing the number of immune receptors also prevents reinfection by more HIV particles (superinfection). Down-regulates host SERINC3 and SERINC5 thereby excluding these proteins from the viral particles. Virion infectivity is drastically higher when SERINC3 or SERINC5 are excluded from the viral envelope, because these host antiviral proteins impair the membrane fusion event necessary for subsequent virion penetration. Functionally, bypasses host T-cell signaling by inducing a transcriptional program nearly identical to that of anti-CD3 cell activation. Interaction with TCR-zeta chain up-regulates the Fas ligand (FasL). Increasing surface FasL molecules and decreasing surface MHC-I molecules on infected CD4(+) cells send attacking cytotoxic CD8+ T-lymphocytes into apoptosis. Plays a role in optimizing the host cell environment for viral replication without causing cell death by apoptosis. Protects the infected cells from apoptosis in order to keep them alive until the next virus generation is ready to strike. Inhibits the Fas and TNFR-mediated death signals by blocking MAP3K5/ASK1. Decreases the half-life of TP53, protecting the infected cell against p53-mediated apoptosis. Inhibits the apoptotic signals regulated by the Bcl-2 family proteins through the formation of a Nef/PI3-kinase/PAK2 complex that leads to activation of PAK2 and induces phosphorylation of host BAD. Its function is as follows. Extracellular Nef protein targets CD4(+) T-lymphocytes for apoptosis by interacting with CXCR4 surface receptors. The chain is Protein Nef from Human immunodeficiency virus type 1 group M subtype A (isolate U455) (HIV-1).